We begin with the raw amino-acid sequence, 363 residues long: Histidinol-phosphate aminotransferase (363 aa).

At Lys-218 the chain carries N6-(pyridoxal phosphate)lysine.

This sequence belongs to the class-II pyridoxal-phosphate-dependent aminotransferase family. Histidinol-phosphate aminotransferase subfamily. Homodimer. Pyridoxal 5'-phosphate is required as a cofactor.

The enzyme catalyses L-histidinol phosphate + 2-oxoglutarate = 3-(imidazol-4-yl)-2-oxopropyl phosphate + L-glutamate. Its pathway is amino-acid biosynthesis; L-histidine biosynthesis; L-histidine from 5-phospho-alpha-D-ribose 1-diphosphate: step 7/9. The polypeptide is Histidinol-phosphate aminotransferase (Xanthomonas euvesicatoria pv. vesicatoria (strain 85-10) (Xanthomonas campestris pv. vesicatoria)).